Reading from the N-terminus, the 397-residue chain is Lysosomal acid lipase/cholesteryl ester hydrolase (397 aa).

An N-terminal signal peptide occupies residues 1 to 25 (MQLLGRVICFVVGILLSGGPTGTIS). The propeptide at 26–72 (AVDPEANMNVTEIIMHWGYPEHSVQTGDGYILGVHRIPHGRKNQFDK) is removed in mature form. N-linked (GlcNAc...) asparagine glycosylation is found at asparagine 34, asparagine 99, and asparagine 159. Residues 84–378 (HGFLADSSNW…EWDHLDFIWG (295 aa)) enclose the AB hydrolase-1 domain. Serine 172 functions as the Charge relay system in the catalytic mechanism. N-linked (GlcNAc...) asparagine glycosylation is found at asparagine 271 and asparagine 319. The active-site Charge relay system is histidine 372.

This sequence belongs to the AB hydrolase superfamily. Lipase family. As to quaternary structure, monomer. Glycosylation is not essential for catalytic activity.

Its subcellular location is the lysosome. The enzyme catalyses a sterol ester + H2O = a sterol + a fatty acid + H(+). It carries out the reaction cholesteryl (9Z-octadecenoate) + H2O = cholesterol + (9Z)-octadecenoate + H(+). It catalyses the reaction a triacylglycerol + H2O = a 1,2-diacylglycerol + a fatty acid + H(+). The catalysed reaction is 1,2-di-(9Z-octadecenoyl)-glycerol + (9Z)-octadecenoate + H(+) = 1,2,3-tri-(9Z-octadecenoyl)-glycerol + H2O. The enzyme catalyses a 1,2-diacylglycerol + H2O = a 1-acylglycerol + a fatty acid + H(+). It carries out the reaction 1,2-di-(9Z-octadecenoyl)-glycerol + H2O = 1-(9Z-octadecenoyl)-glycerol + (9Z)-octadecenoate + H(+). It catalyses the reaction a 1,3-diacylglycerol + H2O = a 1-acylglycerol + a fatty acid + H(+). The catalysed reaction is 1,3-di-(9Z-octadecenoyl)-glycerol + H2O = 1-(9Z-octadecenoyl)-glycerol + (9Z)-octadecenoate + H(+). Catalyzes the deacylation of cholesteryl ester core lipids of endocytosed low density lipoproteins to generate free fatty acids and cholesterol. Hydrolyzes triglycerides (1,2,3-triacylglycerol) and diglycerides (such as 1,2-diacylglycerol and 1,3-diacylglycerol) with preference for the acyl moieties at the sn-1 or sn-3 positions. This Rattus norvegicus (Rat) protein is Lysosomal acid lipase/cholesteryl ester hydrolase (Lipa).